The sequence spans 122 residues: Large ribosomal subunit protein uL14c (122 aa).

It belongs to the universal ribosomal protein uL14 family. As to quaternary structure, part of the 50S ribosomal subunit.

The protein localises to the plastid. Functionally, binds to 23S rRNA. The chain is Large ribosomal subunit protein uL14c from Cuscuta obtusiflora (Peruvian dodder).